Consider the following 602-residue polypeptide: Pentatricopeptide repeat-containing protein At3g04760, chloroplastic (602 aa).

A chloroplast-targeting transit peptide spans 1–78; the sequence is MTPLSSELVG…TDATLPTERR (78 aa). Over residues 42 to 64 the composition is skewed to polar residues; sequence FSNSNPNNDNGRSFSSSGARNLQ. The segment at 42–85 is disordered; that stretch reads FSNSNPNNDNGRSFSSSGARNLQTTTTTDATLPTERRQQHSQSL. Residues 65 to 74 show a composition bias toward low complexity; that stretch reads TTTTTDATLP. PPR repeat units follow at residues 88–122, 123–153, 157–191, 192–226, 227–261, 262–296, 297–331, 332–366, 367–401, 402–436, 437–471, 472–506, 507–541, and 542–576; these read RDTQ…GYNP, DVIL…LEKF, DVFA…DFSP, DTVT…NCQP, TVIT…GLKP, DMFT…GCEP, DVIS…KCDP, NVVT…GLTP, DAYS…GCLP, DIVN…GCSP, NSSS…GIDP, DEIT…EFHP, SVVT…GCRP, and NETT…DAIS.

Belongs to the PPR family. P subfamily.

Its subcellular location is the plastid. The protein localises to the chloroplast. The polypeptide is Pentatricopeptide repeat-containing protein At3g04760, chloroplastic (Arabidopsis thaliana (Mouse-ear cress)).